Consider the following 482-residue polypeptide: GDP-D-glucose phosphorylase 1 (482 aa).

The segment at 1–21 is disordered; the sequence is MEPFPRILDDRLPRNMRRPRP. Catalysis depends on histidine 255, which acts as the Tele-GMP-histidine intermediate. The disordered stretch occupies residues 461-482; that stretch reads MPRSPSIRHRSSTRAQSDEGSK.

It belongs to the GDPGP1 family. As to expression, expressed throughout the neuronal system, in the spermatheca and anterior hypodermal cells.

Its subcellular location is the cytoplasm. The enzyme catalyses GDP-alpha-D-glucose + phosphate = alpha-D-glucose 1-phosphate + GDP + H(+). Specific and highly efficient GDP-D-glucose phosphorylase regulating the levels of GDP-D-glucose in cells. In Caenorhabditis elegans, this protein is GDP-D-glucose phosphorylase 1.